The chain runs to 817 residues: Leucine--tRNA ligase (817 aa).

Residues 42 to 52 (PYPSGRLHMGH) carry the 'HIGH' region motif. The 'KMSKS' region signature appears at 576–580 (KMSKS). K579 lines the ATP pocket.

This sequence belongs to the class-I aminoacyl-tRNA synthetase family.

It is found in the cytoplasm. The catalysed reaction is tRNA(Leu) + L-leucine + ATP = L-leucyl-tRNA(Leu) + AMP + diphosphate. This chain is Leucine--tRNA ligase, found in Halorhodospira halophila (strain DSM 244 / SL1) (Ectothiorhodospira halophila (strain DSM 244 / SL1)).